A 348-amino-acid chain; its full sequence is NADH-ubiquinone oxidoreductase chain 2 (348 aa).

Helical transmembrane passes span 3 to 23, 25 to 45, 59 to 79, 95 to 115, 149 to 171, 178 to 198, 199 to 219, 242 to 262, 274 to 294, and 324 to 344; these read PTVL…TFIG, HWLL…PLMI, YFIT…TNAW, ATLA…HFWL, LNSN…GGLN, ILAY…HYSP, SLTL…FLLF, VIAL…GFMP, SLII…FFYL, and LILL…PLIL.

Belongs to the complex I subunit 2 family.

It localises to the mitochondrion inner membrane. It catalyses the reaction a ubiquinone + NADH + 5 H(+)(in) = a ubiquinol + NAD(+) + 4 H(+)(out). Functionally, core subunit of the mitochondrial membrane respiratory chain NADH dehydrogenase (Complex I) that is believed to belong to the minimal assembly required for catalysis. Complex I functions in the transfer of electrons from NADH to the respiratory chain. The immediate electron acceptor for the enzyme is believed to be ubiquinone. The sequence is that of NADH-ubiquinone oxidoreductase chain 2 (MT-ND2) from Scyliorhinus canicula (Small-spotted catshark).